The sequence spans 330 residues: Laforin (330 aa).

The region spanning 1-123 (MLFRFGVVVP…DNLVDGVYCL (123 aa)) is the CBM20 domain. Residue S25 is modified to Phosphoserine; by AMPK. Substrate-binding positions include W32, K86, 102-106 (GPHHD), D196, D234, and R240. The 168-residue stretch at 155-322 (HYSRILPNIW…QQDFSQKFGK (168 aa)) folds into the Tyrosine-protein phosphatase domain. C265 serves as the catalytic Phosphocysteine intermediate. The Glucan phosphatase signature motif CXAGXGR motif lies at 265–271 (CNAGVGR). Substrate-binding positions include 266–271 (NAGVGR) and Y303.

This sequence belongs to the protein-tyrosine phosphatase family. As to quaternary structure, homodimer. Interacts with PPP1R3B, PPP1R3C, HIRIP5, and EPM2AIP1. Binds glycogen and Lafora bodies. Interacts with NHLRC1/malin (via the NHL repeats). Forms a complex with NHLRC1/malin and HSP70. Interacts with PPP1R3D; in the presence of NHLC1/malin the interaction leads to ubiquitination and autophagic degradation of PPP1R3D. Interacts (via the phosphatase domain) with MAPT/Tau; the interaction dephosphorylates MAPT. Interacts with PRDM8. Post-translationally, polyubiquitinated by NHLRC1/malin. In terms of processing, phosphorylation on Ser-25 by AMPK affects the phosphatase activity of the enzyme and its ability to homodimerize and interact with NHLRC1, PPP1R3C or PRKAA2. In terms of tissue distribution, detected in skeletal muscle and in brain (at protein level). Widely expressed. Higher levels of expression are found in heart, brain, liver, skeletal muscle and kidney.

The protein localises to the cytoplasm. It is found in the endoplasmic reticulum membrane. The protein resides in the cell membrane. The enzyme catalyses O-phospho-L-tyrosyl-[protein] + H2O = L-tyrosyl-[protein] + phosphate. It catalyses the reaction O-phospho-L-seryl-[protein] + H2O = L-seryl-[protein] + phosphate. The catalysed reaction is O-phospho-L-threonyl-[protein] + H2O = L-threonyl-[protein] + phosphate. In terms of biological role, plays an important role in preventing glycogen hyperphosphorylation and the formation of insoluble aggregates, via its activity as glycogen phosphatase, and by promoting the ubiquitination of proteins involved in glycogen metabolism via its interaction with the E3 ubiquitin ligase NHLRC1/malin. Dephosphorylates phosphotyrosine and synthetic substrates, such as para-nitrophenylphosphate (pNPP), and has low activity with phosphoserine and phosphothreonine substrates (in vitro). Has also been shown to dephosphorylate MAPT. Shows strong phosphatase activity towards complex carbohydrates in vitro, avoiding glycogen hyperphosphorylation which is associated with reduced branching and formation of insoluble aggregates. Forms a complex with NHLRC1/malin and HSP70, which suppresses the cellular toxicity of misfolded proteins by promoting their degradation through the ubiquitin-proteasome system (UPS). Acts as a scaffold protein to facilitate PPP1R3C/PTG ubiquitination by NHLRC1/malin. Also promotes proteasome-independent protein degradation through the macroautophagy pathway. The chain is Laforin (Epm2a) from Mus musculus (Mouse).